Here is a 393-residue protein sequence, read N- to C-terminus: Putative mitogen-activated protein kinase kinase kinase 7-like (393 aa).

The Protein kinase domain maps to 11-266 (KLSEKFLGAG…PSMKEIEKFL (256 aa)). ATP-binding positions include 17 to 25 (LGAGSGGAV) and K38. D133 (proton acceptor) is an active-site residue. The interval 339-379 (AAADGDREVRRAEKDTERETSRAAHNGERETRRAGQDVGRE) is disordered.

The protein belongs to the protein kinase superfamily. STE Ser/Thr protein kinase family. MAP kinase kinase kinase subfamily. It depends on Mg(2+) as a cofactor.

The enzyme catalyses L-seryl-[protein] + ATP = O-phospho-L-seryl-[protein] + ADP + H(+). The catalysed reaction is L-threonyl-[protein] + ATP = O-phospho-L-threonyl-[protein] + ADP + H(+). In Drosophila melanogaster (Fruit fly), this protein is Putative mitogen-activated protein kinase kinase kinase 7-like (Takl1).